We begin with the raw amino-acid sequence, 236 residues long: MMDANEIIQFISDSKKSTPVKVYVKGELDKLSASNTIKTFVDSKSGTIFGEWKDIQAYLEENKSLIEDYIIENDRRNSAIPMLDLKNINARIEPGAIIRDQVEIGDGAVIMMGASINIGSVIGEGTMIDMNAVLGGRATVGKNCHIGAGSVLAGVIEPPSAKPVIVEDDVVIGANVVILEGITVGKGSIVAAGSIVTKDVAPNTLVGGTPAKVLKEIDEQTKSKTEIKQELRKLDN.

Belongs to the transferase hexapeptide repeat family. DapH subfamily.

The enzyme catalyses (S)-2,3,4,5-tetrahydrodipicolinate + acetyl-CoA + H2O = L-2-acetamido-6-oxoheptanedioate + CoA. The protein operates within amino-acid biosynthesis; L-lysine biosynthesis via DAP pathway; LL-2,6-diaminopimelate from (S)-tetrahydrodipicolinate (acetylase route): step 1/3. In terms of biological role, catalyzes the transfer of an acetyl group from acetyl-CoA to tetrahydrodipicolinate. This is 2,3,4,5-tetrahydropyridine-2,6-dicarboxylate N-acetyltransferase from Oceanobacillus iheyensis (strain DSM 14371 / CIP 107618 / JCM 11309 / KCTC 3954 / HTE831).